A 201-amino-acid chain; its full sequence is Small ribosomal subunit protein uS4c (201 aa).

The interval 20–43 (GLTSKRPRAGSDLRNQSRSGKRSQ) is disordered. Positions 89–149 (MRLDNILFRL…DEQKSRALIQ (61 aa)) constitute an S4 RNA-binding domain.

It belongs to the universal ribosomal protein uS4 family. As to quaternary structure, part of the 30S ribosomal subunit. Contacts protein S5. The interaction surface between S4 and S5 is involved in control of translational fidelity.

It is found in the plastid. It localises to the chloroplast. One of the primary rRNA binding proteins, it binds directly to 16S rRNA where it nucleates assembly of the body of the 30S subunit. Its function is as follows. With S5 and S12 plays an important role in translational accuracy. The polypeptide is Small ribosomal subunit protein uS4c (rps4) (Buxus microphylla (Littleleaf boxwood)).